The chain runs to 1229 residues: Vacuolar protein sorting-associated protein 8 homolog (1229 aa).

Residues 67-89 (EFGMPVPHATPTPSIGEDSTIRT) form a disordered region. A CHCR repeat occupies 901–1063 (ETTRLLSLHY…ILPHQELQSI (163 aa)). The RING-type; atypical zinc finger occupies 1148 to 1189 (CSMCRQRLYDHSQVLIFGGCGHGIHEQCMEESETQFEECPRC).

Belongs to the VPS8 family. In terms of assembly, component of the class C core vacuole/endosome tethering (CORVET) complex composed of at least Vps8, dor/Vps18, car/Vps33A and Vps16A; unlike in other species, Vps11 is not part of the Drosophila complex. Due to the reduced number of components the Drosophila CORVET complex is often referred to as the miniCORVET complex. Has a higher affinity than the homotypic fusion and vacuole protein sorting (HOPS) tethering complex-specific component lt/Vps41 for Vps16A, car/Vps33A and dor/Vps18, the core components shared by both tethering complexes.

It localises to the early endosome. Functionally, part of the class C core vacuole/endosome tethering (CORVET) complex involved in endo-lysosomal vesicle trafficking and lysosome biogenesis by facilitating docking and fusion of endosomal vesicles. The CORVET complex acts upstream of the homotypic fusion and vacuole protein sorting (HOPS) tethering complex but is not involved in autophagic flux. The CORVET complex may cooperate with the early endosomal tether Rbsn-5 to mediate endosomal fusion. As part of the CORVET complex recruited to endosomes by activated GTP-bound Rab5. Specifically required for endocytic trafficking in a subset of cells, such as hemocytes and nephrocytes, which are highly active in endocytosis. The protein is Vacuolar protein sorting-associated protein 8 homolog of Drosophila melanogaster (Fruit fly).